The sequence spans 156 residues: Small ribosomal subunit protein uS7 (156 aa).

The protein belongs to the universal ribosomal protein uS7 family. In terms of assembly, part of the 30S ribosomal subunit. Contacts proteins S9 and S11.

One of the primary rRNA binding proteins, it binds directly to 16S rRNA where it nucleates assembly of the head domain of the 30S subunit. Is located at the subunit interface close to the decoding center, probably blocks exit of the E-site tRNA. The protein is Small ribosomal subunit protein uS7 of Citrobacter koseri (strain ATCC BAA-895 / CDC 4225-83 / SGSC4696).